The following is a 727-amino-acid chain: Elongation factor 2 (727 aa).

The 242-residue stretch at 19–260 (DQIRNMGICA…MAITHLPNPL (242 aa)) folds into the tr-type G domain. Residues 28–35 (AHIDHGKT), 94–98 (DTPGH), and 148–151 (NKVD) each bind GTP. The residue at position 603 (His-603) is a Diphthamide.

This sequence belongs to the TRAFAC class translation factor GTPase superfamily. Classic translation factor GTPase family. EF-G/EF-2 subfamily.

It localises to the cytoplasm. In terms of biological role, catalyzes the GTP-dependent ribosomal translocation step during translation elongation. During this step, the ribosome changes from the pre-translocational (PRE) to the post-translocational (POST) state as the newly formed A-site-bound peptidyl-tRNA and P-site-bound deacylated tRNA move to the P and E sites, respectively. Catalyzes the coordinated movement of the two tRNA molecules, the mRNA and conformational changes in the ribosome. The protein is Elongation factor 2 of Methanococcus maripaludis (strain C6 / ATCC BAA-1332).